Here is a 350-residue protein sequence, read N- to C-terminus: 4-hydroxy-3-methylbut-2-enyl diphosphate reductase (350 aa).

C36 is a binding site for [4Fe-4S] cluster. Residues H65 and H101 each coordinate (2E)-4-hydroxy-3-methylbut-2-enyl diphosphate. Dimethylallyl diphosphate contacts are provided by H65 and H101. Positions 65 and 101 each coordinate isopentenyl diphosphate. C123 provides a ligand contact to [4Fe-4S] cluster. H151 lines the (2E)-4-hydroxy-3-methylbut-2-enyl diphosphate pocket. Residue H151 coordinates dimethylallyl diphosphate. H151 lines the isopentenyl diphosphate pocket. Catalysis depends on E153, which acts as the Proton donor. T192 serves as a coordination point for (2E)-4-hydroxy-3-methylbut-2-enyl diphosphate. Residue C222 coordinates [4Fe-4S] cluster. Residues S250, S251, N252, and S295 each coordinate (2E)-4-hydroxy-3-methylbut-2-enyl diphosphate. Residues S250, S251, N252, and S295 each contribute to the dimethylallyl diphosphate site. The isopentenyl diphosphate site is built by S250, S251, N252, and S295.

This sequence belongs to the IspH family. [4Fe-4S] cluster is required as a cofactor.

It catalyses the reaction isopentenyl diphosphate + 2 oxidized [2Fe-2S]-[ferredoxin] + H2O = (2E)-4-hydroxy-3-methylbut-2-enyl diphosphate + 2 reduced [2Fe-2S]-[ferredoxin] + 2 H(+). The enzyme catalyses dimethylallyl diphosphate + 2 oxidized [2Fe-2S]-[ferredoxin] + H2O = (2E)-4-hydroxy-3-methylbut-2-enyl diphosphate + 2 reduced [2Fe-2S]-[ferredoxin] + 2 H(+). The protein operates within isoprenoid biosynthesis; dimethylallyl diphosphate biosynthesis; dimethylallyl diphosphate from (2E)-4-hydroxy-3-methylbutenyl diphosphate: step 1/1. It functions in the pathway isoprenoid biosynthesis; isopentenyl diphosphate biosynthesis via DXP pathway; isopentenyl diphosphate from 1-deoxy-D-xylulose 5-phosphate: step 6/6. Its function is as follows. Catalyzes the conversion of 1-hydroxy-2-methyl-2-(E)-butenyl 4-diphosphate (HMBPP) into a mixture of isopentenyl diphosphate (IPP) and dimethylallyl diphosphate (DMAPP). Acts in the terminal step of the DOXP/MEP pathway for isoprenoid precursor biosynthesis. In Rhizobium meliloti (strain 1021) (Ensifer meliloti), this protein is 4-hydroxy-3-methylbut-2-enyl diphosphate reductase.